The following is a 389-amino-acid chain: Alanine racemase (389 aa).

Residue lysine 46 is the Proton acceptor; specific for D-alanine of the active site. An N6-(pyridoxal phosphate)lysine modification is found at lysine 46. Arginine 144 is a substrate binding site. The Proton acceptor; specific for L-alanine role is filled by tyrosine 275. Methionine 323 is a substrate binding site.

It belongs to the alanine racemase family. Pyridoxal 5'-phosphate serves as cofactor.

The enzyme catalyses L-alanine = D-alanine. It participates in amino-acid biosynthesis; D-alanine biosynthesis; D-alanine from L-alanine: step 1/1. In terms of biological role, catalyzes the interconversion of L-alanine and D-alanine. May also act on other amino acids. The sequence is that of Alanine racemase (alr) from Mycolicibacterium smegmatis (strain ATCC 700084 / mc(2)155) (Mycobacterium smegmatis).